Here is a 440-residue protein sequence, read N- to C-terminus: Calcium/calmodulin-regulated receptor-like kinase 1 (440 aa).

Residues 8–28 traverse the membrane as a helical segment; that stretch reads LIVGISLGLVIGVVLAISALF. A calmodulin binding region spans residues 28–228; the sequence is FCFRYHRKKS…ARGLEYLHDG (201 aa). In terms of domain architecture, Protein kinase spans 113–380; the sequence is CNFTTLIGQG…DIVQVLTRVI (268 aa). Residues 119 to 127 and Lys141 contribute to the ATP site; that span reads IGQGAFGPV. Tyr186 is modified (phosphotyrosine). The active-site Proton acceptor is Asp237. Phosphoserine is present on Ser241. Phosphothreonine is present on Thr274. Tyr282 is modified (phosphotyrosine). Positions 369-440 are calmodulin binding; it reads MRDIVQVLTR…DSSIAEDVIL (72 aa). A disordered region spans residues 386 to 427; that stretch reads RKRQKNSPSPSPRLPPPPPIVEESEGELTANGSLRSEIHRRD. The segment covering 394–405 has biased composition (pro residues); the sequence is SPSPRLPPPPPI.

The protein belongs to the protein kinase superfamily. Ser/Thr protein kinase family. In terms of assembly, interacts with calmodulin (CaM) in a calcium- (Ca(2+)-) dependent manner. Binds to MEKK1. Similar transcript expression levels in seedlings, roots, leaves, stems and flowers, and lower levels in siliques, but protein accumulates mostly in 7-day-old seedlings, old roots and young leaves and, to a lower extent, in young roots, old leaves, flowers and siliques (at protein level).

Its subcellular location is the cell membrane. The protein localises to the endosome membrane. It carries out the reaction L-seryl-[protein] + ATP = O-phospho-L-seryl-[protein] + ADP + H(+). It catalyses the reaction L-threonyl-[protein] + ATP = O-phospho-L-threonyl-[protein] + ADP + H(+). Its activity is regulated as follows. Kinase activity is stimulated by calcium/calmodulin, but blocked by chlorpromazine. In terms of biological role, required for cold tolerance, via the activation of MAP kinases activity. Phosphorylates and activates MEKK1 in response to cold in a calcium-dependent manner. The sequence is that of Calcium/calmodulin-regulated receptor-like kinase 1 from Arabidopsis thaliana (Mouse-ear cress).